The following is a 133-amino-acid chain: Helix-loop-helix protein 1 (133 aa).

The segment at 1–78 (MMLNSDTMEL…RRRATAKYRT (78 aa)) is disordered. The segment covering 25–39 (DCGGGPGPDGAGSGD) has biased composition (gly residues). Residues 52 to 65 (ESGRKDLQHLSREE) are compositionally biased toward basic and acidic residues. Residues 66 to 78 (RRRRRRATAKYRT) show a composition bias toward basic residues. In terms of domain architecture, bHLH spans 75–127 (KYRTAHATRERIRVEAFNLAFAELRKLLPTLPPDKKLSKIEILRLAICYISYL).

As to quaternary structure, efficient DNA binding requires dimerization with another bHLH protein.

Its subcellular location is the nucleus. In terms of biological role, may serve as DNA-binding protein and may be involved in the control of cell-type determination, possibly within the developing nervous system. The sequence is that of Helix-loop-helix protein 1 (Nhlh1) from Mus musculus (Mouse).